A 61-amino-acid chain; its full sequence is Small venom protein 1 (61 aa).

The N-terminal stretch at 1–20 is a signal peptide; that stretch reads MRCVAIFLVVICAFVLQALA.

Expressed by the venom gland.

It localises to the secreted. The polypeptide is Small venom protein 1 (Pimpla hypochondriaca (Parasitoid wasp)).